A 214-amino-acid chain; its full sequence is Pyridoxine/pyridoxamine 5'-phosphate oxidase (214 aa).

Substrate-binding positions include 9–12 (RKDY) and K67. FMN is bound by residues 62 to 67 (RMVLLK), 77 to 78 (FT), R83, K84, and Q106. 3 residues coordinate substrate: Y124, R128, and S132. FMN-binding positions include 141-142 (QS) and W186. 192–194 (RLH) lines the substrate pocket. R196 serves as a coordination point for FMN.

It belongs to the pyridoxamine 5'-phosphate oxidase family. Homodimer. It depends on FMN as a cofactor.

The enzyme catalyses pyridoxamine 5'-phosphate + O2 + H2O = pyridoxal 5'-phosphate + H2O2 + NH4(+). It carries out the reaction pyridoxine 5'-phosphate + O2 = pyridoxal 5'-phosphate + H2O2. It participates in cofactor metabolism; pyridoxal 5'-phosphate salvage; pyridoxal 5'-phosphate from pyridoxamine 5'-phosphate: step 1/1. The protein operates within cofactor metabolism; pyridoxal 5'-phosphate salvage; pyridoxal 5'-phosphate from pyridoxine 5'-phosphate: step 1/1. Its function is as follows. Catalyzes the oxidation of either pyridoxine 5'-phosphate (PNP) or pyridoxamine 5'-phosphate (PMP) into pyridoxal 5'-phosphate (PLP). The polypeptide is Pyridoxine/pyridoxamine 5'-phosphate oxidase (Nostoc punctiforme (strain ATCC 29133 / PCC 73102)).